We begin with the raw amino-acid sequence, 865 residues long: Rifampicin phosphotransferase (865 aa).

The segment at 2–314 (SGRLVVDLQD…FHIVQSRPIT (313 aa)) is ATP-binding. ATP-binding residues include Lys-23, Arg-117, Gly-132, Thr-136, Gln-183, Glu-297, Gln-309, and Arg-311. The rifampicin-binding stretch occupies residues 327–752 (FRVYLSVGHQ…TSEGVALSGA (426 aa)). The tract at residues 403-430 (ENGEFEPTPAETDGGAPPAGDGAEPDEA) is disordered. Residues 409–424 (PTPAETDGGAPPAGDG) are compositionally biased toward low complexity. The swivel phosphohistidine stretch occupies residues 765–863 (GLAVSAGTVE…VHGTEGYIEL (99 aa)). Catalysis depends on His-823, which acts as the Tele-phosphohistidine intermediate.

It belongs to the rifampicin phosphotransferase family.

It catalyses the reaction rifampicin + ATP + H2O = 21-phosphorifampicin + AMP + phosphate + 2 H(+). Its function is as follows. Catalyzes the phosphorylation of rifampicin, also known as rifampin (RIF), leading to its inactivation. Confers high level resistance to a variety of clinically used rifamycin antibiotics. This is Rifampicin phosphotransferase from Streptomyces sp.